A 286-amino-acid chain; its full sequence is 4-hydroxybenzoate octaprenyltransferase (286 aa).

7 helical membrane passes run 21–40, 95–115, 142–162, 167–187, 210–230, 235–255, and 266–286; these read GTLL…AGGM, ILFV…NGLV, FLGI…TGEV, WWLF…YAMV, QIIG…GWSA, LYGL…MLIF, and FLNN…DYLI.

This sequence belongs to the UbiA prenyltransferase family. It depends on Mg(2+) as a cofactor.

It is found in the cell inner membrane. It carries out the reaction all-trans-octaprenyl diphosphate + 4-hydroxybenzoate = 4-hydroxy-3-(all-trans-octaprenyl)benzoate + diphosphate. The protein operates within cofactor biosynthesis; ubiquinone biosynthesis. In terms of biological role, catalyzes the prenylation of para-hydroxybenzoate (PHB) with an all-trans polyprenyl group. Mediates the second step in the final reaction sequence of ubiquinone-8 (UQ-8) biosynthesis, which is the condensation of the polyisoprenoid side chain with PHB, generating the first membrane-bound Q intermediate 3-octaprenyl-4-hydroxybenzoate. This chain is 4-hydroxybenzoate octaprenyltransferase, found in Shewanella baltica (strain OS223).